The following is a 951-amino-acid chain: Translation initiation factor IF-2 (951 aa).

Disordered stretches follow at residues 58 to 255 and 305 to 329; these read AERK…AVVI and DVSR…KSLS. Residues 101–170 are compositionally biased toward low complexity; sequence AEPQYAEPQQ…PQAQPAQPAA (70 aa). The segment covering 171–216 has biased composition (pro residues); the sequence is PVAPPAPSAQPSAPQPPAAQPRPPQPPMPSRPPPAGYRPAPPPGAR. The span at 217-234 shows a compositional bias: low complexity; that stretch reads PPMSAAPGAPAQPGAAGQ. The region spanning 450 to 619 is the tr-type G domain; the sequence is IRPPVVTVMG…ALQSEVLELK (170 aa). The segment at 459 to 466 is G1; that stretch reads GHVDHGKT. 459–466 lines the GTP pocket; that stretch reads GHVDHGKT. Residues 484 to 488 form a G2 region; that stretch reads GITQH. Residues 505 to 508 form a G3 region; sequence DTPG. Residues 505-509 and 559-562 contribute to the GTP site; these read DTPGH and NKVD. The G4 stretch occupies residues 559–562; sequence NKVD. The interval 595-597 is G5; it reads SAR.

This sequence belongs to the TRAFAC class translation factor GTPase superfamily. Classic translation factor GTPase family. IF-2 subfamily.

The protein localises to the cytoplasm. In terms of biological role, one of the essential components for the initiation of protein synthesis. Protects formylmethionyl-tRNA from spontaneous hydrolysis and promotes its binding to the 30S ribosomal subunits. Also involved in the hydrolysis of GTP during the formation of the 70S ribosomal complex. The sequence is that of Translation initiation factor IF-2 from Anaeromyxobacter dehalogenans (strain 2CP-1 / ATCC BAA-258).